Consider the following 945-residue polypeptide: Isoleucine--tRNA ligase (945 aa).

The 'HIGH' region signature appears at 66–76 (PYANGDIHLGH). E581 provides a ligand contact to L-isoleucyl-5'-AMP. The 'KMSKS' region motif lies at 622-626 (KMSKS). An ATP-binding site is contributed by K625. Zn(2+) contacts are provided by C908, C911, C928, and C931.

It belongs to the class-I aminoacyl-tRNA synthetase family. IleS type 1 subfamily. In terms of assembly, monomer. Zn(2+) is required as a cofactor.

The protein localises to the cytoplasm. It carries out the reaction tRNA(Ile) + L-isoleucine + ATP = L-isoleucyl-tRNA(Ile) + AMP + diphosphate. Catalyzes the attachment of isoleucine to tRNA(Ile). As IleRS can inadvertently accommodate and process structurally similar amino acids such as valine, to avoid such errors it has two additional distinct tRNA(Ile)-dependent editing activities. One activity is designated as 'pretransfer' editing and involves the hydrolysis of activated Val-AMP. The other activity is designated 'posttransfer' editing and involves deacylation of mischarged Val-tRNA(Ile). The sequence is that of Isoleucine--tRNA ligase from Burkholderia lata (strain ATCC 17760 / DSM 23089 / LMG 22485 / NCIMB 9086 / R18194 / 383).